The chain runs to 265 residues: Undecaprenyl-diphosphatase (265 aa).

7 helical membrane-spanning segments follow: residues 42 to 62, 82 to 102, 108 to 128, 143 to 163, 181 to 201, 221 to 241, and 248 to 264; these read ATTF…VLYW, GIML…AAHS, LFTP…MLLV, MSPA…WPGF, GLAA…ATGY, GFVV…ALVG, and FAWY…YFMA.

Belongs to the UppP family.

The protein localises to the cell inner membrane. The catalysed reaction is di-trans,octa-cis-undecaprenyl diphosphate + H2O = di-trans,octa-cis-undecaprenyl phosphate + phosphate + H(+). Its function is as follows. Catalyzes the dephosphorylation of undecaprenyl diphosphate (UPP). Confers resistance to bacitracin. In Nitratidesulfovibrio vulgaris (strain ATCC 29579 / DSM 644 / CCUG 34227 / NCIMB 8303 / VKM B-1760 / Hildenborough) (Desulfovibrio vulgaris), this protein is Undecaprenyl-diphosphatase.